The sequence spans 192 residues: MNTIWIAVGALTLLGLVFGAILGYASRRFAVEDDPVVEKIDAILPQSQCGQCGYPGCRPYAEAVGLQGEKINRCAPGGEAVMLKIAELLNVEPQPCDGEEQQAAPVRMLAVIDENNCIGCTKCIQACPVDAIVGATRAMHTVMSDLCTGCNLCVDPCPTHCIELRPVNETPDSWKWDLNTIPVRIIPVEQHA.

The hydrophobic stretch occupies residues 1–26 (MNTIWIAVGALTLLGLVFGAILGYAS). The 60-residue stretch at 32-91 (EDDPVVEKIDAILPQSQCGQCGYPGCRPYAEAVGLQGEKINRCAPGGEAVMLKIAELLNV) folds into the 4Fe-4S domain. [4Fe-4S] cluster contacts are provided by cysteine 49, cysteine 52, cysteine 57, cysteine 74, cysteine 117, cysteine 120, cysteine 123, cysteine 127, cysteine 147, cysteine 150, cysteine 153, and cysteine 157. 2 consecutive 4Fe-4S ferredoxin-type domains span residues 108-137 (MLAV…GATR) and 138-167 (AMHT…LRPV).

Belongs to the 4Fe4S bacterial-type ferredoxin family. RnfB subfamily. The complex is composed of six subunits: RsxA, RsxB, RsxC, RsxD, RsxE and RsxG. Requires [4Fe-4S] cluster as cofactor.

It is found in the cell inner membrane. Part of a membrane-bound complex that couples electron transfer with translocation of ions across the membrane. Required to maintain the reduced state of SoxR. The chain is Ion-translocating oxidoreductase complex subunit B from Salmonella dublin (strain CT_02021853).